The primary structure comprises 282 residues: Proteasome subunit beta (282 aa).

Positions 1–55 (MDNSSTGRYPAASLPPAYLRPGSSSFTDFLRAQAPELLPTARSFPEGSVVQAAHG) are cleaved as a propeptide — removed in mature form; by autocatalysis. The active-site Nucleophile is the threonine 56.

This sequence belongs to the peptidase T1B family. As to quaternary structure, the 20S proteasome core is composed of 14 alpha and 14 beta subunits that assemble into four stacked heptameric rings, resulting in a barrel-shaped structure. The two inner rings, each composed of seven catalytic beta subunits, are sandwiched by two outer rings, each composed of seven alpha subunits. The catalytic chamber with the active sites is on the inside of the barrel. Has a gated structure, the ends of the cylinder being occluded by the N-termini of the alpha-subunits. Is capped by the proteasome-associated ATPase, ARC.

It localises to the cytoplasm. The enzyme catalyses Cleavage of peptide bonds with very broad specificity.. The protein operates within protein degradation; proteasomal Pup-dependent pathway. With respect to regulation, the formation of the proteasomal ATPase ARC-20S proteasome complex, likely via the docking of the C-termini of ARC into the intersubunit pockets in the alpha-rings, may trigger opening of the gate for substrate entry. Interconversion between the open-gate and close-gate conformations leads to a dynamic regulation of the 20S proteasome proteolysis activity. Its function is as follows. Component of the proteasome core, a large protease complex with broad specificity involved in protein degradation. The protein is Proteasome subunit beta of Actinosynnema mirum (strain ATCC 29888 / DSM 43827 / JCM 3225 / NBRC 14064 / NCIMB 13271 / NRRL B-12336 / IMRU 3971 / 101).